The primary structure comprises 162 residues: Interleukin-15 (162 aa).

Residues 1–29 form the signal peptide; the sequence is MRISKPHLRSISIQCYLCLLLKSHFLTEA. Positions 30–48 are excised as a propeptide; that stretch reads GIHVFILGCFSAGLPKTEA. Cystine bridges form between Cys-83-Cys-133 and Cys-90-Cys-136. An N-linked (GlcNAc...) asparagine glycan is attached at Asn-127.

This sequence belongs to the IL-15/IL-21 family.

It localises to the secreted. Cytokine that plays a major role in the development of inflammatory and protective immune responses to microbial invaders and parasites by modulating immune cells of both the innate and adaptive immune systems. Stimulates the proliferation of natural killer cells, T-cells and B-cells and promotes the secretion of several cytokines. In monocytes, induces the production of IL8 and monocyte chemotactic protein 1/CCL2, two chemokines that attract neutrophils and monocytes respectively to sites of infection. Unlike most cytokines, which are secreted in soluble form, IL15 is expressed in association with its high affinity IL15RA on the surface of IL15-producing cells and delivers signals to target cells that express IL2RB and IL2RG receptor subunits. Binding to its receptor triggers the phosphorylation of JAK1 and JAK3 and the recruitment and subsequent phosphorylation of signal transducer and activator of transcription-3/STAT3 and STAT5. In mast cells, induces the rapid tyrosine phosphorylation of STAT6 and thereby controls mast cell survival and release of cytokines such as IL4. The sequence is that of Interleukin-15 (IL15) from Chlorocebus aethiops (Green monkey).